We begin with the raw amino-acid sequence, 62 residues long: Large ribosomal subunit protein uL29 (62 aa).

The protein belongs to the universal ribosomal protein uL29 family.

This Geobacter sp. (strain M21) protein is Large ribosomal subunit protein uL29.